The following is a 362-amino-acid chain: Sterol-4-alpha-carboxylate 3-dehydrogenase, decarboxylating (362 aa).

Met-1 carries the N-acetylmethionine modification. Tyr-161 acts as the Proton acceptor in catalysis. Lys-165 provides a ligand contact to NAD(+). Residues 287–307 (WMAYYLAFLLSLLVMVVSPLI) traverse the membrane as a helical segment. The Prevents secretion from ER motif lies at 359–362 (RKDK).

The protein belongs to the 3-beta-HSD family. In terms of assembly, homodimer.

The protein localises to the endoplasmic reticulum membrane. It is found in the lipid droplet. The enzyme catalyses a 3beta-hydroxysteroid-4alpha-carboxylate + NADP(+) = a 3-oxosteroid + CO2 + NADPH. It carries out the reaction a 3beta-hydroxysteroid-4alpha-carboxylate + NAD(+) = a 3-oxosteroid + CO2 + NADH. The catalysed reaction is 4alpha-carboxyzymosterol + NADP(+) = zymosterone + CO2 + NADPH. It catalyses the reaction 4alpha-carboxy-4beta-methyl-5alpha-cholest-8-en-3beta-ol + NADP(+) = 4alpha-methyl-5alpha-cholest-8-en-3-one + CO2 + NADPH. The enzyme catalyses 4alpha-carboxy-5alpha-cholest-8-ene-3beta-ol + NADP(+) = 5alpha-cholest-8-en-3-one + CO2 + NADPH. It carries out the reaction 4beta-methylzymosterol-4alpha-carboxylate + NADP(+) = 3-dehydro-4-methylzymosterol + CO2 + NADPH. The catalysed reaction is 4beta-methylzymosterol-4alpha-carboxylate + NAD(+) = 3-dehydro-4-methylzymosterol + CO2 + NADH. It catalyses the reaction 4alpha-carboxy-5alpha-cholest-8-ene-3beta-ol + NAD(+) = 5alpha-cholest-8-en-3-one + CO2 + NADH. The enzyme catalyses 4alpha-carboxy-4beta-methyl-5alpha-cholest-8-en-3beta-ol + NAD(+) = 4alpha-methyl-5alpha-cholest-8-en-3-one + CO2 + NADH. It carries out the reaction 4alpha-carboxyzymosterol + NAD(+) = zymosterone + CO2 + NADH. It participates in steroid biosynthesis; zymosterol biosynthesis; zymosterol from lanosterol: step 4/6. Functionally, catalyzes the NAD(P)(+)-dependent oxidative decarboxylation of the C4 methyl groups of 4-alpha-carboxysterols in post-squalene cholesterol biosynthesis. Plays a role in the regulation of the endocytic trafficking of EGFR. The polypeptide is Sterol-4-alpha-carboxylate 3-dehydrogenase, decarboxylating (Nsdhl) (Mus musculus (Mouse)).